A 1046-amino-acid polypeptide reads, in one-letter code: DNA-directed RNA polymerase subunit beta' (1046 aa).

3 residues coordinate Mg(2+): Asp383, Asp385, and Asp387. Positions 752, 826, 833, and 836 each coordinate Zn(2+).

This sequence belongs to the RNA polymerase beta' chain family. The RNAP catalytic core consists of 2 alpha, 1 beta, 1 beta' and 1 omega subunit. When a sigma factor is associated with the core the holoenzyme is formed, which can initiate transcription. Mg(2+) serves as cofactor. It depends on Zn(2+) as a cofactor.

It catalyses the reaction RNA(n) + a ribonucleoside 5'-triphosphate = RNA(n+1) + diphosphate. In terms of biological role, DNA-dependent RNA polymerase catalyzes the transcription of DNA into RNA using the four ribonucleoside triphosphates as substrates. The sequence is that of DNA-directed RNA polymerase subunit beta' from Weissella hellenica.